Consider the following 445-residue polypeptide: C4-dicarboxylate transport protein (445 aa).

The next 8 helical transmembrane spans lie at V24–P44, L62–I82, F105–A125, G163–G183, F201–F221, L237–A257, I322–S342, and A370–I390.

Belongs to the dicarboxylate/amino acid:cation symporter (DAACS) (TC 2.A.23) family.

Its subcellular location is the cell inner membrane. Responsible for the transport of dicarboxylates such as succinate, fumarate, and malate from the periplasm across the membrane. The sequence is that of C4-dicarboxylate transport protein from Rhodopseudomonas palustris (strain HaA2).